Reading from the N-terminus, the 191-residue chain is Large ribosomal subunit protein bL9 (191 aa).

It belongs to the bacterial ribosomal protein bL9 family.

Functionally, binds to the 23S rRNA. This chain is Large ribosomal subunit protein bL9, found in Granulibacter bethesdensis (strain ATCC BAA-1260 / CGDNIH1).